A 784-amino-acid chain; its full sequence is MKKRIPTLLATMIATALYSQQGLAADLASQCMLGVPSYDRPLVQGDTNDLPVTINADHAKGDYPDDAVFTGSVDIMQGNSRLQADEVQLHQKEAPGQPEPVRTVDALGNVHYDDNQVILKGPKGWANLNTKDTNVWEGDYQMVGRQGRGKADLMKQRGENRYTILDNGSFTSCLPGSDTWSVVGSEIIHDREEQVAEIWNARFKVGPVPIFYSPYLQLPVGDKRRSGFLIPNAKYTTTNYFEFYLPYYWNIAPNMDATITPHYMHRRGNIMWENEFRYLSQAGAGLMELDYLPSDKVYEDEHPNDDSSRRWLFYWNHSGVMDQVWRFNVDYTKVSDPSYFNDFDNKYGSSTDGYATQKFSVGYAVQNFNATVSTKQFQVFSEQNTSSYSAEPQLDVNYYQNDVGPFDTRIYGQAVHFVNTRDDMPEATRVHLEPTINLPLSNNWGSINTEAKFLATHYQQTNLDWYNSRNTTKLDESVNRVMPQFKVDGKMVFERDMEMLAPGYTQTLEPRAQYLYVPYRDQSDIYNYDSSLLQSDYSGLFRDRTYGGLDRIASANQVTTGVTSRIYDDAAVERFNISVGQIYYFTESRTGDDNITWENDDKTGSLVWAGDTYWRISERWGLRGGIQYDTRLDNVATSNSSIEYRRDEDRLVQLNYHYASPEYIQATLPKYYSTAEQYKNGISQVGAVASRPIADRWSIVGAYYYDTNANKQADSMLGVQYSSCCYAIRVGYERKLNGWDNDKQHAVYDNAIGFNIELRGLSSNYGLGTQEMLRSNILPYQNTL.

The signal sequence occupies residues 1-24; the sequence is MKKRIPTLLATMIATALYSQQGLA. 2 cysteine pairs are disulfide-bonded: Cys31–Cys724 and Cys173–Cys725.

It belongs to the LptD family. In terms of assembly, component of the lipopolysaccharide transport and assembly complex. Interacts with LptE and LptA. Contains two intramolecular disulfide bonds.

It is found in the cell outer membrane. Together with LptE, is involved in the assembly of lipopolysaccharide (LPS) at the surface of the outer membrane. The polypeptide is LPS-assembly protein LptD (Shigella flexneri).